A 126-amino-acid polypeptide reads, in one-letter code: Glycine cleavage system H protein (126 aa).

The region spanning 24–105 is the Lipoyl-binding domain; sequence TLTVGITDHA…AYGVWLFKLK (82 aa). Residue Lys65 is modified to N6-lipoyllysine.

This sequence belongs to the GcvH family. The glycine cleavage system is composed of four proteins: P, T, L and H. Requires (R)-lipoate as cofactor.

The glycine cleavage system catalyzes the degradation of glycine. The H protein shuttles the methylamine group of glycine from the P protein to the T protein. This Burkholderia vietnamiensis (strain G4 / LMG 22486) (Burkholderia cepacia (strain R1808)) protein is Glycine cleavage system H protein.